The sequence spans 218 residues: Large ribosomal subunit protein bL25 (218 aa).

Positions 197–218 are disordered; that stretch reads PAEESGEKPVAHIEEKESTEKE. Positions 201-218 are enriched in basic and acidic residues; the sequence is SGEKPVAHIEEKESTEKE.

Belongs to the bacterial ribosomal protein bL25 family. CTC subfamily. As to quaternary structure, part of the 50S ribosomal subunit; part of the 5S rRNA/L5/L18/L25 subcomplex. Contacts the 5S rRNA. Binds to the 5S rRNA independently of L5 and L18.

Its function is as follows. This is one of the proteins that binds to the 5S RNA in the ribosome where it forms part of the central protuberance. The polypeptide is Large ribosomal subunit protein bL25 (Dehalococcoides mccartyi (strain ATCC BAA-2100 / JCM 16839 / KCTC 5957 / BAV1)).